A 346-amino-acid polypeptide reads, in one-letter code: 2,5-dichlorohydroquinone reductive dechlorinase (346 aa).

The GST N-terminal domain maps to 43-154 (PRFELFHFVF…YLCDALSGGT (112 aa)). Residues 189–335 (DRRPESMQAV…AIIQWPGHPP (147 aa)) form the GST C-terminal domain.

Belongs to the GST superfamily.

The enzyme catalyses 2,5-dichlorohydroquinone + 2 glutathione = chlorohydroquinone + glutathione disulfide + chloride + H(+). It catalyses the reaction chlorohydroquinone + 2 glutathione = hydroquinone + glutathione disulfide + chloride + H(+). The protein operates within xenobiotic degradation; gamma-hexachlorocyclohexane degradation. In terms of biological role, catalyzes the degradation of 2,5-dichlorohydroquinone (2,5-DCHQ) into hydroquinone (HQ) via chlorohydroquinone (CHQ). Is involved in the degradation pathway that allows S.japonicum UT26 to grow on gamma-hexachlorocyclohexane (gamma-HCH or lindane) as the sole source of carbon and energy. However, the conversion of CHQ to HQ by LinD seems not to be essential for this degradation pathway, because the conversion rate of CHQ to HQ is much lower than that of 2,5-DCHQ to CHQ. CHQ is more efficiently degraded by LinE in strain UT26. The sequence is that of 2,5-dichlorohydroquinone reductive dechlorinase from Sphingobium indicum (strain DSM 16413 / CCM 7287 / MTCC 6362 / UT26 / NBRC 101211 / UT26S) (Sphingobium japonicum).